Reading from the N-terminus, the 236-residue chain is Leucyl/phenylalanyl-tRNA--protein transferase (236 aa).

The protein belongs to the L/F-transferase family.

Its subcellular location is the cytoplasm. It carries out the reaction N-terminal L-lysyl-[protein] + L-leucyl-tRNA(Leu) = N-terminal L-leucyl-L-lysyl-[protein] + tRNA(Leu) + H(+). It catalyses the reaction N-terminal L-arginyl-[protein] + L-leucyl-tRNA(Leu) = N-terminal L-leucyl-L-arginyl-[protein] + tRNA(Leu) + H(+). The enzyme catalyses L-phenylalanyl-tRNA(Phe) + an N-terminal L-alpha-aminoacyl-[protein] = an N-terminal L-phenylalanyl-L-alpha-aminoacyl-[protein] + tRNA(Phe). Its function is as follows. Functions in the N-end rule pathway of protein degradation where it conjugates Leu, Phe and, less efficiently, Met from aminoacyl-tRNAs to the N-termini of proteins containing an N-terminal arginine or lysine. The protein is Leucyl/phenylalanyl-tRNA--protein transferase of Shewanella sp. (strain MR-7).